We begin with the raw amino-acid sequence, 757 residues long: Elongation factor G, mitochondrial (757 aa).

Residues 66–344 (DRMRNIGISA…VLDYLPCPME (279 aa)) form the tr-type G domain. GTP is bound by residues 75–82 (AHIDSGKT), 142–146 (DTPGH), and 196–199 (NKLD).

It belongs to the TRAFAC class translation factor GTPase superfamily. Classic translation factor GTPase family. EF-G/EF-2 subfamily.

It localises to the mitochondrion. It participates in protein biosynthesis; polypeptide chain elongation. Its function is as follows. Mitochondrial GTPase that catalyzes the GTP-dependent ribosomal translocation step during translation elongation. During this step, the ribosome changes from the pre-translocational (PRE) to the post-translocational (POST) state as the newly formed A-site-bound peptidyl-tRNA and P-site-bound deacylated tRNA move to the P and E sites, respectively. Catalyzes the coordinated movement of the two tRNA molecules, the mRNA and conformational changes in the ribosome. This Oryza sativa subsp. japonica (Rice) protein is Elongation factor G, mitochondrial.